Here is a 430-residue protein sequence, read N- to C-terminus: Protein translocase subunit SecY (430 aa).

The next 10 membrane-spanning stretches (helical) occupy residues 18–38 (VIFT…PVPG), 67–87 (FSIF…MQLL), 118–138 (IVLG…FFPG), 145–165 (VSVY…LMWL), 177–197 (GISI…LNLI), 213–233 (IVVI…VIFV), 270–290 (VIPV…AGLF), 309–329 (PIGM…YTFI), 369–389 (FVGS…IKFA), and 390–410 (DLPQ…GVAL).

Belongs to the SecY/SEC61-alpha family. As to quaternary structure, component of the Sec protein translocase complex. Heterotrimer consisting of SecY, SecE and SecG subunits. The heterotrimers can form oligomers, although 1 heterotrimer is thought to be able to translocate proteins. Interacts with the ribosome. Interacts with SecDF, and other proteins may be involved. Interacts with SecA.

Its subcellular location is the cell membrane. In terms of biological role, the central subunit of the protein translocation channel SecYEG. Consists of two halves formed by TMs 1-5 and 6-10. These two domains form a lateral gate at the front which open onto the bilayer between TMs 2 and 7, and are clamped together by SecE at the back. The channel is closed by both a pore ring composed of hydrophobic SecY resides and a short helix (helix 2A) on the extracellular side of the membrane which forms a plug. The plug probably moves laterally to allow the channel to open. The ring and the pore may move independently. In Halalkalibacterium halodurans (strain ATCC BAA-125 / DSM 18197 / FERM 7344 / JCM 9153 / C-125) (Bacillus halodurans), this protein is Protein translocase subunit SecY.